Reading from the N-terminus, the 174-residue chain is Small ribosomal subunit protein uS5 (174 aa).

Residues 18–81 (LKDRLVSVNR…EDAKKNLVKI (64 aa)) form the S5 DRBM domain.

It belongs to the universal ribosomal protein uS5 family. As to quaternary structure, part of the 30S ribosomal subunit. Contacts proteins S4 and S8.

In terms of biological role, with S4 and S12 plays an important role in translational accuracy. Its function is as follows. Located at the back of the 30S subunit body where it stabilizes the conformation of the head with respect to the body. The chain is Small ribosomal subunit protein uS5 from Flavobacterium psychrophilum (strain ATCC 49511 / DSM 21280 / CIP 103535 / JIP02/86).